The following is a 97-amino-acid chain: YcgL domain-containing protein PA14_47450 (97 aa).

The 85-residue stretch at 3–87 (RICSVYKSPR…GEEEYIEHLP (85 aa)) folds into the YcgL domain.

In Pseudomonas aeruginosa (strain UCBPP-PA14), this protein is YcgL domain-containing protein PA14_47450.